The chain runs to 405 residues: MVDPIRSPLSRAFAPVRALFVSDASAGILLILVAAAAMIVANSPLAGAYEEMFYGDLAWTPIAKLDDLHLWINDGLMAIFFFVVGLEVKRELICGQLSSPEQRTLPVLAAIAGMAVPAIVYVGVVGTDSALVRGWAIPAATDIAFAMGVLGLLGSRVPASLRLFLLTVAIVDDIGAVLVIAAFYTANLKVMWLVIALGIFGVMVGMNKFGVDRIWPYILVALVLWVAVLFSGVHATIAGVMAALTIPMRRKDGHSLLEKLEHGLAPWSAYLVVPIFGFANAGVNLSGMGLDAVLAPLPLAIAAGLVVGKQLGIFGIIVAAVKLGIAKAPANANWIEIWGVSILTGIGFTMSLFISGLAFTDSRLLIDEAKIGILGGSLISAILGYTILRLTTTHPEERPPQTVTP.

The next 11 membrane-spanning stretches (helical) occupy residues 20–40 (FVSD…AMIV), 68–88 (LHLW…GLEV), 105–125 (LPVL…VGVV), 134–154 (GWAI…GLLG), 163–183 (LFLL…IAAF), 186–206 (ANLK…MVGM), 214–234 (IWPY…SGVH), 263–283 (GLAP…NAGV), 301–321 (IAAG…VAAV), 334–354 (WIEI…SLFI), and 371–391 (IGIL…LRLT).

The protein belongs to the NhaA Na(+)/H(+) (TC 2.A.33) antiporter family.

It is found in the cell inner membrane. The catalysed reaction is Na(+)(in) + 2 H(+)(out) = Na(+)(out) + 2 H(+)(in). Its function is as follows. Na(+)/H(+) antiporter that extrudes sodium in exchange for external protons. The protein is Na(+)/H(+) antiporter NhaA 1 of Erythrobacter litoralis (strain HTCC2594).